The following is a 504-amino-acid chain: Maturase K (504 aa).

Belongs to the intron maturase 2 family. MatK subfamily.

It localises to the plastid. The protein resides in the chloroplast. Functionally, usually encoded in the trnK tRNA gene intron. Probably assists in splicing its own and other chloroplast group II introns. In Vigna mungo (Black gram), this protein is Maturase K.